A 139-amino-acid polypeptide reads, in one-letter code: Short neuropeptide F (139 aa).

The propeptide occupies 1 to 23; it reads MGRARRTVRAPAQHDALGGHALA. Residues 1–48 form a disordered region; it reads MGRARRTVRAPAQHDALGGHALARKSVRSPSRRLRFGRRSDPDMPPQA. A compositionally biased stretch (basic residues) spans 22-37; sequence LARKSVRSPSRRLRFG. F36 carries the post-translational modification Phenylalanine amide. Residues 40–62 constitute a propeptide that is removed on maturation; sequence SDPDMPPQAPLDEMNELLSLREV. F70 is subject to Phenylalanine amide. A propeptide spanning residues 74–96 is cleaved from the precursor; the sequence is SEERAVPHIFPQEFLTQEQDRAV. Phenylalanine amide is present on F105. A propeptide spanning residues 109–139 is cleaved from the precursor; sequence SDNNMFLLPYESALPQEVKANGSVEDDRQQE.

It belongs to the NPY family. As to expression, sNPF peptide 1: Expressed in corpora cardiaca (CC), corpora allata (CA), antennal lobe (AL) and gnathal ganglion (GNG) (at protein level). Expression in AL detected in all animals, in GNG in most animals, expression in CC and CA in some animals (at protein level). sNPF peptide 2: Expressed in corpora cardiaca (CC), corpora allata (CA), antennal lobe (AL) and gnathal ganglion (GNG) (at protein level). Expression in AL detected in all animals, in GNG, CC and CA in most animals (at protein level). sNPF peptide 3: Expressed in corpora cardiaca (CC), corpora allata (CA), antennal lobe (AL) and gnathal ganglion (GNG) (at protein level). Expression detected in all animals (at protein level).

It localises to the secreted. In terms of biological role, plays a role in controlling food intake and regulating body size. The polypeptide is Short neuropeptide F (Agrotis ipsilon (Black cutworm moth)).